Consider the following 362-residue polypeptide: MHSFASLLAYGLAAGATLASASPIEARDSCTFTTAAAAKAGKAKCSTITLDSIKVPAGTTLDLTGLTSGTKVIFEGTTTFDYEEWAGPLISMSGKDITVTGASGHLINCDGSRWWDGKGTSGKKKPKFFYAHGLDSSSITGLNIKNTPLMAFSVESDDITLTDITINNADGDSLGGHNTDAFDVGNSVGVNIIKPWVHNQDDCLAINSGENIWFTGGTCIGGHGLSIGSVGDRSNNVVKNVTIEHSTVSNSENAVRIKTISGATGSVSEITYSNIVMSGISDYGVVIQQDYEDGKPTGKPTNGVTITDVKLESVTGTVDSKATDIYLLCGSGSCSDWTWDDVKVTGGKKSSACKNYPSVASC.

Residues 1–20 (MHSFASLLAYGLAAGATLAS) form the signal peptide. A propeptide spanning residues 21 to 27 (ASPIEAR) is cleaved from the precursor. Cysteines 30 and 45 form a disulfide. One copy of the PbH1 1 repeat lies at 156-186 (SDDITLTDITINNADGDSLGGHNTDAFDVGN). The Proton donor role is filled by Asp201. A disulfide bond links Cys203 and Cys219. PbH1 repeat units follow at residues 209-229 (GENIWFTGGTCIGGHGLSIGS), 238-259 (VKNVTIEHSTVSNSENAVRIKT), 267-289 (VSEITYSNIVMSGISDYGVVIQQ), and 301-322 (TNGVTITDVKLESVTGTVDSKA). The active site involves His223. Asn240 carries N-linked (GlcNAc...) asparagine glycosylation. Cystine bridges form between Cys329-Cys334 and Cys353-Cys362.

The protein belongs to the glycosyl hydrolase 28 family.

The protein resides in the secreted. It carries out the reaction (1,4-alpha-D-galacturonosyl)n+m + H2O = (1,4-alpha-D-galacturonosyl)n + (1,4-alpha-D-galacturonosyl)m.. Functionally, involved in maceration and soft-rotting of plant tissue. Hydrolyzes the 1,4-alpha glycosidic bonds of de-esterified pectate in the smooth region of the plant cell wall. The chain is Probable endopolygalacturonase II (pgaII) from Aspergillus kawachii (strain NBRC 4308) (White koji mold).